Reading from the N-terminus, the 263-residue chain is Leukocyte-associated immunoglobulin-like receptor 1 (263 aa).

Positions 1–21 (MSLHPVILLVLVLCLGWKINT) are cleaved as a signal peptide. Topologically, residues 22–144 (QEGSLPDITI…TSWLKTYSIY (123 aa)) are extracellular. The region spanning 27–115 (PDITIFPNSS…TWSERSKTLE (89 aa)) is the Ig-like C2-type domain. 2 N-linked (GlcNAc...) asparagine glycosylation sites follow: Asn34 and Asn90. An intrachain disulfide couples Cys49 to Cys99. A helical transmembrane segment spans residues 145–165 (IFTVVSVIFLLCLSALLFCFL). Residues 166 to 263 (RHRQKKQGLP…SSTYAAIIRH (98 aa)) lie on the Cytoplasmic side of the membrane. 2 consecutive short sequence motifs (ITIM motif) follow at residues 226-231 (VTYIQL) and 255-260 (STYAAI). Tyr228 and Tyr257 each carry phosphotyrosine.

In terms of assembly, interacts with SH2 domains of tyrosine-protein phosphatases PTPN6 and PTPN11. The interaction with PTPN6 is constitutive. Interacts with the SH2 domain of CSK. Binds with high affinity to extracellular matrix collagens, the interaction is functionally important. Phosphorylation at Tyr-228 and Tyr-257 activates it. May be phosphorylated by LCK. In terms of processing, N-glycosylated. In terms of tissue distribution, expressed in lymphoid organs and in cell lines of hemopoietic origin.

Its subcellular location is the cell membrane. Its function is as follows. Functions as an inhibitory receptor that plays a constitutive negative regulatory role on cytolytic function of natural killer (NK) cells, B-cells and T-cells. Activation by Tyr phosphorylation results in recruitment and activation of the phosphatases PTPN6 and PTPN11. It also reduces the increase of intracellular calcium evoked by B-cell receptor ligation. May also play its inhibitory role independently of SH2-containing phosphatases. Modulates cytokine production in CD4+ T-cells, down-regulating IL2 and IFNG production while inducing secretion of transforming growth factor beta. Also down-regulates IgG and IgE production in B-cells as well as IL8, IL10 and TNF secretion. Inhibits proliferation and induces apoptosis in myeloid leukemia cell lines as well as prevents nuclear translocation of NF-kappa-B p65 subunit/RELA and phosphorylation of I-kappa-B alpha/CHUK in these cells. Inhibits the differentiation of peripheral blood precursors towards dendritic cells. This Mus musculus (Mouse) protein is Leukocyte-associated immunoglobulin-like receptor 1 (Lair1).